We begin with the raw amino-acid sequence, 293 residues long: 33 kDa chaperonin (293 aa).

Cystine bridges form between Cys-235–Cys-237 and Cys-267–Cys-270.

It belongs to the HSP33 family. Under oxidizing conditions two disulfide bonds are formed involving the reactive cysteines. Under reducing conditions zinc is bound to the reactive cysteines and the protein is inactive.

The protein resides in the cytoplasm. In terms of biological role, redox regulated molecular chaperone. Protects both thermally unfolding and oxidatively damaged proteins from irreversible aggregation. Plays an important role in the bacterial defense system toward oxidative stress. This Deinococcus radiodurans (strain ATCC 13939 / DSM 20539 / JCM 16871 / CCUG 27074 / LMG 4051 / NBRC 15346 / NCIMB 9279 / VKM B-1422 / R1) protein is 33 kDa chaperonin.